We begin with the raw amino-acid sequence, 338 residues long: Heme-dependent oxidative N-demethylase alpha subunit (338 aa).

Residues tyrosine 38 and histidine 194 each coordinate heme b. Arginine 224 acts as the Proton donor in catalysis. Asparagine 226 is a heme b binding site. Glutamate 266 is a dimethylamine binding site. Tyrosine 317 and lysine 318 together coordinate heme b.

In terms of assembly, the heme-dependent oxidative N-demethylase (HODM) is a heterotetramer composed of a catalytic alpha subunit, a FMN/2Fe-2S-dependent oxidoreductase beta subunit, a gamma subunit with putative aminotransferase activity, and a delta subunit of unknown function.

It catalyses the reaction dimethylamine + NADPH + O2 + H(+) = methylamine + formaldehyde + NADP(+) + H2O. In terms of biological role, component of the heme-dependent oxidative N-demethylase (HODM) enzyme, that catalyzes the NADPH-dependent oxidation of dimethylamine (DMA) to methylamine (MA) and formaldehyde. Functions in bacterial methylated amine catabolism, linking alkylamine oxidation to the tetrahydrofolate C1 pool. The alpha subunit of HODM binds heme, oxygen and DMA, and serves as the site of the oxidative N-demethylase activity. The sequence is that of Heme-dependent oxidative N-demethylase alpha subunit from Ectopseudomonas mendocina (strain ymp) (Pseudomonas mendocina).